The sequence spans 172 residues: UPF0102 protein AM1_3954 (172 aa).

The protein belongs to the UPF0102 family.

This is UPF0102 protein AM1_3954 from Acaryochloris marina (strain MBIC 11017).